The chain runs to 231 residues: Large ribosomal subunit protein uL1 (231 aa).

It belongs to the universal ribosomal protein uL1 family. In terms of assembly, part of the 50S ribosomal subunit.

Binds directly to 23S rRNA. The L1 stalk is quite mobile in the ribosome, and is involved in E site tRNA release. In terms of biological role, protein L1 is also a translational repressor protein, it controls the translation of the L11 operon by binding to its mRNA. In Polaromonas naphthalenivorans (strain CJ2), this protein is Large ribosomal subunit protein uL1.